A 123-amino-acid polypeptide reads, in one-letter code: Small ribosomal subunit protein uS12c (123 aa).

This sequence belongs to the universal ribosomal protein uS12 family. Part of the 30S ribosomal subunit.

Its subcellular location is the plastid. It localises to the chloroplast. Functionally, with S4 and S5 plays an important role in translational accuracy. Located at the interface of the 30S and 50S subunits. This chain is Small ribosomal subunit protein uS12c (rps12), found in Chara vulgaris (Common stonewort).